A 238-amino-acid polypeptide reads, in one-letter code: Small ribosomal subunit protein uS2 (238 aa).

The protein belongs to the universal ribosomal protein uS2 family.

This is Small ribosomal subunit protein uS2 from Chloroflexus aggregans (strain MD-66 / DSM 9485).